The chain runs to 96 residues: MSDYGIALGMIETRGLVPAIEAADAMTKAAEVRLVSREFVGGGYVTVLVRGETGAVNAAVRAGADACERVGDGLVAAHIIARPHKEVEPVLTMEQK.

Positions 7 to 92 (ALGMIETRGL…PHKEVEPVLT (86 aa)) constitute a BMC domain.

Belongs to the bacterial microcompartments protein family. CsoS1 subfamily. In terms of assembly, homohexamer with a small central pore. Forms a CsoS2-CsoS1-RuBisCO complex.

Its subcellular location is the carboxysome. One of shell proteins of the carboxysome, a polyhedral inclusion where RuBisCO (ribulose bisphosphate carboxylase, ccbL-ccbS) is sequestered. Assembles into hexamers which make sheets that form the facets of the polyhedral carboxysome. The shell probably limits the diffusion of CO(2) into and out of the carboxysome. This is Carboxysome shell protein CsoS1A from Hydrogenovibrio crunogenus (strain DSM 25203 / XCL-2) (Thiomicrospira crunogena).